A 461-amino-acid chain; its full sequence is MGKITKFVKSKVCNSTNRAFPLIVNHHTMASFQIQIISETLIKPSSPTPPSLKQHQLSDYDKTMHHMYTPVAFLYTSHGHGIPSTDEVSQLLKNSLSKTLKHYSHFAGRLVGDSHVDCNDMGVKLLEVRVRCPMAEVLKRPNTDAQDLVYPKGLPWSMAKEDILVVAQISYFDCGGIAVSADISHKIVDVASITTFMNDWAAMARNSSYKPSPQIVSPTILKMDDVPATAEDDNMKENICQSRRFLFHDSKIAELKALAVNSGAENPTRVELVTAILHKCAVTASTAALGSFMPNILLLAVNLRSIISPPLAKTSIGNMSSCYAISATHENRMKFPLLAGELRRSKIKLFQKYGKQLNESELLFLNSTDKAHESQKLSDGDNFDCFIFSSLCRSPFYEVDFGWGRPVLVYVPNCPFKNTFFLIDTPTQDGIEALVTLEENVMQIFENDEGLLAFASLIKDS.

Active-site proton acceptor residues include H185 and D400.

It belongs to the plant acyltransferase family. Monomer.

The protein localises to the cytoplasm. The enzyme catalyses 17,18-epoxy-17-hydroxycur-19-ene + acetyl-CoA = diaboline + CoA. It functions in the pathway alkaloid biosynthesis. Its function is as follows. Acetyltransferase involved in the biosynthesis of curare monoterpene indole alkaloids (MIAs), natural products such as diaboline, a pharmacologically active compound used to regulate blood pressure. Curare alkaloids act as animal glycine receptor antagonists. Catalyzes the conversion of 17,18-epoxy-17-hydroxycur-19-ene (Wieland-Gumlich aldehyde) to diaboline. This chain is Diaboline synthase, found in Strychnos sp.